Consider the following 321-residue polypeptide: tRNA-5-methyluridine(54) 2-sulfurtransferase (321 aa).

Residues cysteine 3, cysteine 6, cysteine 22, and histidine 25 each contribute to the Zn(2+) site. ATP contacts are provided by residues 53 to 55 (AVS), aspartate 59, and isoleucine 79. Residues cysteine 130 and cysteine 133 each contribute to the [4Fe-4S] cluster site. Residue lysine 137 forms a Glycyl lysine isopeptide (Lys-Gly) (interchain with G-Cter in TtuB) linkage. ATP is bound by residues glycine 156 and aspartate 161. Cysteine 222 is a binding site for [4Fe-4S] cluster. Residues lysine 226 and lysine 229 each participate in a glycyl lysine isopeptide (Lys-Gly) (interchain with G-Cter in TtuB) cross-link. The Zn(2+) site is built by cysteine 274, cysteine 277, cysteine 286, and cysteine 289.

The protein belongs to the TtcA family. TtuA subfamily. Homodimer. Is able to form a heterocomplex with TtuB. It depends on [4Fe-4S] cluster as a cofactor. Mg(2+) serves as cofactor. In terms of processing, conjugated to TtuB via covalent linkages involving Lys-137, Lys-226 and Lys-229.

The enzyme catalyses [TtuB sulfur-carrier protein]-C-terminal-Gly-aminoethanethioate + 5-methyluridine(54) in tRNA + ATP + H2O = [TtuB sulfur-carrier protein]-C-terminal Gly-Gly + 5-methyl-2-thiouridine(54) in tRNA + AMP + diphosphate + H(+). It participates in tRNA modification. With respect to regulation, enzymatic activity may be regulated by TtuB conjugation. Its function is as follows. Catalyzes the ATP-dependent 2-thiolation of 5-methyluridine residue at position 54 in the T loop of tRNAs, leading to 5-methyl-2-thiouridine (m(5)s(2)U or s(2)T). This modification allows thermal stabilization of tRNAs in thermophilic microorganisms, and is required for cell growth at high temperatures. TtuA transfers the S atom from the thiocarboxylated C-terminus of TtuB to tRNA. The chain is tRNA-5-methyluridine(54) 2-sulfurtransferase from Thermus thermophilus (strain ATCC BAA-163 / DSM 7039 / HB27).